A 349-amino-acid chain; its full sequence is N-acetyltaurine hydrolase (349 aa).

A divalent metal cation-binding residues include His26, His28, Glu169, His201, His230, and Asp298.

Belongs to the metallo-dependent hydrolases superfamily. Phosphotriesterase family. The cofactor is a divalent metal cation.

Its subcellular location is the cytoplasm. It localises to the cytosol. The catalysed reaction is N-acetyltaurine + H2O = taurine + acetate. The enzyme catalyses N-propanoyltaurine + H2O = propanoate + taurine. It carries out the reaction N-acetyl-L-methionine + H2O = L-methionine + acetate. It catalyses the reaction N-acetyl-L-isoleucine + H2O = L-isoleucine + acetate. The catalysed reaction is N-acetyl-L-leucine + H2O = L-leucine + acetate. The enzyme catalyses N-acetyl-L-valine + H2O = L-valine + acetate. N-acetyltaurine hydrolase that regulates feeding by catalyzing the hydrolysis of N-acetyltaurine into taurine and acetate. N-acetyltaurine has anorexigenic and anti-obesity effects that are dependent on GFRAL receptor and GDF15. PTER also acts on other N-acetyl amino acids (Met, Ile, Leu, Val) and N-propionyltaurine, but at lower rates. This is N-acetyltaurine hydrolase (PTER) from Bos taurus (Bovine).